Here is a 162-residue protein sequence, read N- to C-terminus: Phosphopantetheine adenylyltransferase (162 aa).

Serine 9 lines the substrate pocket. ATP contacts are provided by residues 9–10 (SF) and histidine 17. 3 residues coordinate substrate: lysine 41, leucine 73, and lysine 87. Residues 88-90 (GLR), glutamate 98, and 123-129 (CSFLSSS) contribute to the ATP site.

This sequence belongs to the bacterial CoaD family. Homohexamer. It depends on Mg(2+) as a cofactor.

Its subcellular location is the cytoplasm. It catalyses the reaction (R)-4'-phosphopantetheine + ATP + H(+) = 3'-dephospho-CoA + diphosphate. It participates in cofactor biosynthesis; coenzyme A biosynthesis; CoA from (R)-pantothenate: step 4/5. In terms of biological role, reversibly transfers an adenylyl group from ATP to 4'-phosphopantetheine, yielding dephospho-CoA (dPCoA) and pyrophosphate. This is Phosphopantetheine adenylyltransferase from Natranaerobius thermophilus (strain ATCC BAA-1301 / DSM 18059 / JW/NM-WN-LF).